The sequence spans 496 residues: Splicing factor U2AF 65 kDa subunit (496 aa).

Residues 1–26 (MSDHQDGMKLEDIERQFLDVAQREGG) show a composition bias toward basic and acidic residues. The interval 1–142 (MSDHQDGMKL…PKKYRFWDVP (142 aa)) is disordered. The span at 59-77 (KKRKRSRSRDRDTRRRSRS) shows a compositional bias: basic residues. 2 stretches are compositionally biased toward basic and acidic residues: residues 78-96 (RDRG…DRSR) and 105-138 (GGRD…KYRF). 3 consecutive RRM domains span residues 184–266 (RRLY…RPRD), 291–368 (NKIF…LACA), and 404–488 (NMVT…YYDV).

Forms a heterodimer with the U2AF small subunit.

The protein resides in the nucleus. Necessary for the splicing of pre-mRNA. Binds to the polypyrimidine tract of introns early during spliceosome assembly. This is Splicing factor U2AF 65 kDa subunit (uaf-1) from Caenorhabditis elegans.